The chain runs to 217 residues: Protein MODIFYING WALL LIGNIN-2 (217 aa).

The N-terminal stretch at 1-23 (MHNLFLYSVVFSLGLVSFITCFA) is a signal peptide. The Cytoplasmic segment spans residues 24-51 (AEFKRTQKEDIRWDTERNCYVPGSHAFG). Residues 52 to 72 (LGSAAVLCFCLAQIVGNIVVF) traverse the membrane as a helical segment. Residues 73-94 (RNHRTRTKREDGYKITDLTLPT) lie on the Extracellular side of the membrane. Residues 95–115 (VLLLLSWSNFVVVVLILSTAI) form a helical membrane-spanning segment. The Cytoplasmic segment spans residues 116 to 137 (SMSRAQAYGEGWLDEDCYLVKD). A helical membrane pass occupies residues 138-158 (GVFAASGCLAILGLGALTISA). Topologically, residues 159 to 217 (TRIKVKKQQQLVQVVIKDQNQDQRRSMEEEQKHDEHQTNKSESVIHLVEEVSSTNISRI) are extracellular. 2 N-linked (GlcNAc...) asparagine glycosylation sites follow: Asn197 and Asn213.

Belongs to the DESIGUAL family.

Its subcellular location is the cell membrane. Together with MWL1, contributes to secondary cell wall biology, specifically lignin biosynthesis. This is Protein MODIFYING WALL LIGNIN-2 from Arabidopsis thaliana (Mouse-ear cress).